Reading from the N-terminus, the 615-residue chain is Peptidoglycan-binding protein YepA (615 aa).

Residues 1–26 (MRNLAALLPALFLLGSSLLPAGTALA) form the signal peptide.

Belongs to the bacterial solute-binding protein 5 family. In terms of assembly, the complex is composed of one ATP-binding protein (YejF), two transmembrane proteins (YejB and YejE) and a solute-binding protein (YepA).

The protein resides in the periplasm. Its function is as follows. Part of the ABC transporter complex YejBEF-YepA involved in the uptake of muropeptides, the breakdown products of cell wall peptidoglycan. The import of muropeptides into the cell enables peptidoglycan recycling, which is vital for cell wall integrity in this bacterium. Probably binds muropeptides. The chain is Peptidoglycan-binding protein YepA from Agrobacterium fabrum (strain C58 / ATCC 33970) (Agrobacterium tumefaciens (strain C58)).